Reading from the N-terminus, the 323-residue chain is GTP 3',8-cyclase (323 aa).

The 225-residue stretch at Lys-4–Pro-228 folds into the Radical SAM core domain. Arg-13 provides a ligand contact to GTP. [4Fe-4S] cluster contacts are provided by Cys-20 and Cys-24. Residue Tyr-26 participates in S-adenosyl-L-methionine binding. [4Fe-4S] cluster is bound at residue Cys-27. Arg-63 provides a ligand contact to GTP. Gly-67 serves as a coordination point for S-adenosyl-L-methionine. GTP is bound at residue Thr-94. Residue Ser-118 participates in S-adenosyl-L-methionine binding. Lys-155 lines the GTP pocket. Met-189 contacts S-adenosyl-L-methionine. [4Fe-4S] cluster contacts are provided by Cys-252 and Cys-255. Arg-257 to Arg-259 contacts GTP. Cys-269 lines the [4Fe-4S] cluster pocket.

It belongs to the radical SAM superfamily. MoaA family. In terms of assembly, monomer and homodimer. It depends on [4Fe-4S] cluster as a cofactor.

It catalyses the reaction GTP + AH2 + S-adenosyl-L-methionine = (8S)-3',8-cyclo-7,8-dihydroguanosine 5'-triphosphate + 5'-deoxyadenosine + L-methionine + A + H(+). The protein operates within cofactor biosynthesis; molybdopterin biosynthesis. Catalyzes the cyclization of GTP to (8S)-3',8-cyclo-7,8-dihydroguanosine 5'-triphosphate. In Petrotoga mobilis (strain DSM 10674 / SJ95), this protein is GTP 3',8-cyclase.